We begin with the raw amino-acid sequence, 203 residues long: Endo-type membrane-bound lytic murein transglycosylase A (203 aa).

Residues 1–15 (MKLRWFAFLIVLLAG) form the signal peptide. C16 is lipidated: N-palmitoyl cysteine. C16 carries S-diacylglycerol cysteine lipidation.

The protein belongs to the transglycosylase Slt family.

The protein resides in the cell outer membrane. It catalyses the reaction Endolytic cleavage of the (1-&gt;4)-beta-glycosidic linkage between N-acetylmuramic acid (MurNAc) and N-acetylglucosamine (GlcNAc) residues in peptidoglycan with concomitant formation of a 1,6-anhydrobond in the MurNAc residue.. Functionally, murein-degrading enzyme. May play a role in recycling of muropeptides during cell elongation and/or cell division. Preferentially cleaves at a distance of more than two disaccharide units from the ends of the glycan chain. This Escherichia coli (strain K12 / MC4100 / BW2952) protein is Endo-type membrane-bound lytic murein transglycosylase A.